The sequence spans 116 residues: NADH-ubiquinone oxidoreductase chain 3 (116 aa).

3 consecutive transmembrane segments (helical) span residues 6 to 26 (FMLL…FWLA), 56 to 76 (FFLV…LLPL), and 85 to 105 (PLLT…GLVY).

Belongs to the complex I subunit 3 family.

The protein resides in the mitochondrion membrane. It carries out the reaction a ubiquinone + NADH + 5 H(+)(in) = a ubiquinol + NAD(+) + 4 H(+)(out). Core subunit of the mitochondrial membrane respiratory chain NADH dehydrogenase (Complex I) that is believed to belong to the minimal assembly required for catalysis. Complex I functions in the transfer of electrons from NADH to the respiratory chain. The immediate electron acceptor for the enzyme is believed to be ubiquinone. This is NADH-ubiquinone oxidoreductase chain 3 (MT-ND3) from Struthio camelus (Common ostrich).